We begin with the raw amino-acid sequence, 228 residues long: Aspartate racemase (228 aa).

Substrate is bound at residue 47–49 (DRT). The active-site Proton donor/acceptor is the Cys-82. Residues 83 to 85 (NTA) and Lys-164 contribute to the substrate site. Residue Cys-194 is the Proton donor/acceptor of the active site.

It belongs to the aspartate/glutamate racemases family. As to quaternary structure, homodimer. The existence of the interchain disulfide bond seen in the crystal structures is uncertain, but disulfide bonds have been reported for cytoplasmic proteins from thermophiles.

It carries out the reaction L-aspartate = D-aspartate. With respect to regulation, weakly inhibited by citrate, but not by asparagine. The sequence is that of Aspartate racemase from Pyrococcus horikoshii (strain ATCC 700860 / DSM 12428 / JCM 9974 / NBRC 100139 / OT-3).